A 499-amino-acid chain; its full sequence is Probable malate:quinone oxidoreductase 4 (499 aa).

This sequence belongs to the MQO family. The cofactor is FAD.

It catalyses the reaction (S)-malate + a quinone = a quinol + oxaloacetate. Its pathway is carbohydrate metabolism; tricarboxylic acid cycle; oxaloacetate from (S)-malate (quinone route): step 1/1. This chain is Probable malate:quinone oxidoreductase 4, found in Staphylococcus epidermidis (strain ATCC 35984 / DSM 28319 / BCRC 17069 / CCUG 31568 / BM 3577 / RP62A).